A 518-amino-acid chain; its full sequence is Membrane-bound lytic murein transglycosylase F (518 aa).

Positions 1-21 are cleaved as a signal peptide; sequence MKKLKINYLFIGILALLLAVA. A non-LT domain region spans residues 22 to 269; it reads LWPSIPWFGK…RIEEKYLGHG (248 aa). The tract at residues 270–518 is LT domain; the sequence is DDFDYVDTRT…SRKGSEEKQN (249 aa). Glu-314 is an active-site residue.

The protein in the N-terminal section; belongs to the bacterial solute-binding protein 3 family. It in the C-terminal section; belongs to the transglycosylase Slt family.

The protein localises to the cell outer membrane. The catalysed reaction is Exolytic cleavage of the (1-&gt;4)-beta-glycosidic linkage between N-acetylmuramic acid (MurNAc) and N-acetylglucosamine (GlcNAc) residues in peptidoglycan, from either the reducing or the non-reducing ends of the peptidoglycan chains, with concomitant formation of a 1,6-anhydrobond in the MurNAc residue.. In terms of biological role, murein-degrading enzyme that degrades murein glycan strands and insoluble, high-molecular weight murein sacculi, with the concomitant formation of a 1,6-anhydromuramoyl product. Lytic transglycosylases (LTs) play an integral role in the metabolism of the peptidoglycan (PG) sacculus. Their lytic action creates space within the PG sacculus to allow for its expansion as well as for the insertion of various structures such as secretion systems and flagella. This Shigella boydii serotype 18 (strain CDC 3083-94 / BS512) protein is Membrane-bound lytic murein transglycosylase F.